Reading from the N-terminus, the 388-residue chain is GTPase Obg (388 aa).

Residues 1–159 (MKFVDEAVIR…RSLKLELLLL (159 aa)) form the Obg domain. One can recognise an OBG-type G domain in the interval 160–333 (ADVGLLGMPN…LALKLLDYIA (174 aa)). Residues 166–173 (GMPNAGKS), 191–195 (FTTLV), 213–216 (DIPG), 283–286 (NKTD), and 314–316 (SAY) each bind GTP. Mg(2+)-binding residues include Ser173 and Thr193.

Belongs to the TRAFAC class OBG-HflX-like GTPase superfamily. OBG GTPase family. As to quaternary structure, monomer. It depends on Mg(2+) as a cofactor.

It localises to the cytoplasm. In terms of biological role, an essential GTPase which binds GTP, GDP and possibly (p)ppGpp with moderate affinity, with high nucleotide exchange rates and a fairly low GTP hydrolysis rate. Plays a role in control of the cell cycle, stress response, ribosome biogenesis and in those bacteria that undergo differentiation, in morphogenesis control. This Shewanella putrefaciens (strain CN-32 / ATCC BAA-453) protein is GTPase Obg.